A 138-amino-acid chain; its full sequence is Basic phospholipase A2 homolog TM-N49 (138 aa).

The N-terminal stretch at 1-16 (MRTLWIMAVLLLGVEG) is a signal peptide. 7 disulfide bridges follow: Cys-42–Cys-131, Cys-44–Cys-60, Cys-59–Cys-111, Cys-65–Cys-138, Cys-66–Cys-104, Cys-73–Cys-97, and Cys-91–Cys-102.

Belongs to the phospholipase A2 family. Group II subfamily. N49 sub-subfamily. As to quaternary structure, homodimer; non-covalently linked. As to expression, expressed by the venom gland.

The protein localises to the secreted. Its function is as follows. Snake venom phospholipase A2 (PLA2) that exhibits potent myotoxic activity causing inflammatory cell infiltration, severe myoedema, myonecrosis and myolysis in the gastrocnemius muscles of BALB/c mice. This is Basic phospholipase A2 homolog TM-N49 from Protobothrops mucrosquamatus (Taiwan habu).